The primary structure comprises 822 residues: Tyrosine-protein kinase Fer (822 aa).

An F-BAR domain is found at 1 to 259; the sequence is MGFGSDLKNS…SVEQIDPSTE (259 aa). Positions 1–300 are important for interaction with membranes containing phosphoinositides; that stretch reads MGFGSDLKNS…QANEIMWNNL (300 aa). Coiled-coil stretches lie at residues 123 to 185 and 301 to 390; these read AEMI…HNQY and TAES…KVQE. Position 402 is a phosphotyrosine (tyrosine 402). A Phosphoserine modification is found at serine 434. Positions 460–550 constitute an SH2 domain; sequence WYHGAIPRIE…KSGVVLLNPI (91 aa). The region spanning 563-816 is the Protein kinase domain; it reads VILGELLGKG…FSELQKELTI (254 aa). ATP is bound by residues 569-577 and lysine 591; that span reads LGKGNFGEV. Tyrosine 615 is modified (phosphotyrosine; by autocatalysis). Aspartate 684 serves as the catalytic Proton acceptor. A Phosphotyrosine; by autocatalysis modification is found at tyrosine 714.

Belongs to the protein kinase superfamily. Tyr protein kinase family. Fes/fps subfamily. As to quaternary structure, homotrimer. Interacts with ARHGDIA, IRS1, JAK1, NRP1, PIK3R1, PLEC and TMF1. Interacts with PPP1CA and regulates its phosphorylation at 'Thr-320'. Interacts with CTNND1, EGFR, FLT3, PECAM1, PDGFR and STAT3. Interacts (via SH2 domain) with CTTN. Interacts with HSP90; this stabilizes phosphorylated FER and protects FER against proteasomal degradation. Component of a complex that contains at least FER, CTTN and PTK2/FAK1. Post-translationally, autophosphorylated. Polyubiquitinated; this leads to proteasomal degradation. As to expression, isoform 1 is detected in normal colon and in fibroblasts (at protein level). Isoform 3 is detected in normal testis, in colon carcinoma-derived metastases in lung, liver and ovary, and in colon carcinoma and hepato carcinoma cell lines (at protein level). Isoform 3 is not detected in normal colon or in normal fibroblasts (at protein level). Widely expressed.

Its subcellular location is the cytoplasm. It localises to the cytoskeleton. The protein resides in the cell membrane. The protein localises to the cell projection. It is found in the cell junction. Its subcellular location is the membrane. It localises to the nucleus. The protein resides in the cell cortex. The catalysed reaction is L-tyrosyl-[protein] + ATP = O-phospho-L-tyrosyl-[protein] + ADP + H(+). Its activity is regulated as follows. Activated by phosphatidic acid binding. Activated by hydrogen peroxide (in vitro). Activated by reactive oxygen species (ROS). Functionally, tyrosine-protein kinase that acts downstream of cell surface receptors for growth factors and plays a role in the regulation of the actin cytoskeleton, microtubule assembly, lamellipodia formation, cell adhesion, cell migration and chemotaxis. Acts downstream of EGFR, KIT, PDGFRA and PDGFRB. Acts downstream of EGFR to promote activation of NF-kappa-B and cell proliferation. May play a role in the regulation of the mitotic cell cycle. Plays a role in the insulin receptor signaling pathway and in activation of phosphatidylinositol 3-kinase. Acts downstream of the activated FCER1 receptor and plays a role in FCER1 (high affinity immunoglobulin epsilon receptor)-mediated signaling in mast cells. Plays a role in the regulation of mast cell degranulation. Plays a role in leukocyte recruitment and diapedesis in response to bacterial lipopolysaccharide (LPS). Plays a role in synapse organization, trafficking of synaptic vesicles, the generation of excitatory postsynaptic currents and neuron-neuron synaptic transmission. Plays a role in neuronal cell death after brain damage. Phosphorylates CTTN, CTNND1, PTK2/FAK1, GAB1, PECAM1 and PTPN11. May phosphorylate JUP and PTPN1. Can phosphorylate STAT3, but the biological relevance of this depends on cell type and stimulus. The protein is Tyrosine-protein kinase Fer (FER) of Homo sapiens (Human).